A 1240-amino-acid chain; its full sequence is Pectate lyase L (1240 aa).

The N-terminal stretch at 1-26 (MRNCKGLSILLCFLLVFFAMPFPAVA) is a signal peptide. Has catalytic activity regions lie at residues 27–551 (EEAE…VTVR) and 545–1240 (TLKV…KSIK). Ca(2+)-binding residues include aspartate 325, glutamate 349, aspartate 350, aspartate 1049, aspartate 1073, aspartate 1074, and aspartate 1077. The Proton acceptor role is filled by lysine 1117.

The protein belongs to the polysaccharide lyase 9 family. Ca(2+) is required as a cofactor.

It localises to the secreted. The enzyme catalyses Eliminative cleavage of (1-&gt;4)-alpha-D-galacturonan to give oligosaccharides with 4-deoxy-alpha-D-galact-4-enuronosyl groups at their non-reducing ends.. Inhibited by the metal chelator ethylenediaminetetraacetic acid (EDTA). In terms of biological role, cleaves polygalacturonate or partially methylated pectin. When assayed on polygalacturonate or on pectin, it releases monogalacturonate as the principal product. This is Pectate lyase L from Thermoclostridium stercorarium (Clostridium stercorarium).